The chain runs to 95 residues: Small ribosomal subunit protein bS21 (95 aa).

The tract at residues 56 to 95 is disordered; it reads KLARKKMQREGLLPMKPKPVFGAGPGAGRGGPAAGPRGPR. Residues 78–88 show a composition bias toward gly residues; the sequence is AGPGAGRGGPA.

This sequence belongs to the bacterial ribosomal protein bS21 family.

The sequence is that of Small ribosomal subunit protein bS21 from Nitrobacter winogradskyi (strain ATCC 25391 / DSM 10237 / CIP 104748 / NCIMB 11846 / Nb-255).